The chain runs to 569 residues: uncharacterized protein (569 aa).

The helical transmembrane segment at 2–22 (VVIAALLGSLAVLAFLFYLWY) threads the bilayer.

It localises to the membrane. This is an uncharacterized protein from Mycoplasma pneumoniae (strain ATCC 29342 / M129 / Subtype 1) (Mycoplasmoides pneumoniae).